The sequence spans 305 residues: uncharacterized protein (305 aa).

3 helical membrane passes run 52-72 (TINL…SKII), 89-109 (IAGF…FIAA), and 120-140 (VIAI…GSLS).

It belongs to the MscS (TC 1.A.23) family.

It localises to the cell membrane. This is an uncharacterized protein from Buchnera aphidicola subsp. Acyrthosiphon pisum (strain APS) (Acyrthosiphon pisum symbiotic bacterium).